Reading from the N-terminus, the 215-residue chain is 3-demethoxyubiquinol 3-hydroxylase (215 aa).

Fe cation contacts are provided by glutamate 64, glutamate 94, histidine 97, glutamate 146, glutamate 178, and histidine 181.

Belongs to the COQ7 family. Fe cation is required as a cofactor.

It localises to the cell membrane. The catalysed reaction is a 5-methoxy-2-methyl-3-(all-trans-polyprenyl)benzene-1,4-diol + AH2 + O2 = a 3-demethylubiquinol + A + H2O. It functions in the pathway cofactor biosynthesis; ubiquinone biosynthesis. Functionally, catalyzes the hydroxylation of 2-nonaprenyl-3-methyl-6-methoxy-1,4-benzoquinol during ubiquinone biosynthesis. The protein is 3-demethoxyubiquinol 3-hydroxylase of Pseudomonas fluorescens (strain SBW25).